Reading from the N-terminus, the 40-residue chain is Large ribosomal subunit protein bL36 (40 aa).

It belongs to the bacterial ribosomal protein bL36 family.

The sequence is that of Large ribosomal subunit protein bL36 from Corynebacterium urealyticum (strain ATCC 43042 / DSM 7109).